Reading from the N-terminus, the 926-residue chain is Periplasmic nitrate reductase (926 aa).

Positions 1-30 (MNRRDFIKSAAASAACASAGIAIPANLSAA) form a signal peptide, tat-type signal. Residues 37 to 93 (WRWDKAACRFCGTGCGIMVATKEGKIVAVKGDPEAPVNRGLNCIKGYFNAKIMYGED) form the 4Fe-4S Mo/W bis-MGD-type domain. Residues cysteine 44, cysteine 47, cysteine 51, and cysteine 79 each coordinate [4Fe-4S] cluster. Residues lysine 81, glutamine 149, asparagine 174, cysteine 178, 211–218 (WGANMAEM), methionine 419, glutamine 423, asparagine 529, 554–555 (SD), lysine 577, aspartate 604, and 816–825 (TGRVLEHWHS) each bind Mo-bis(molybdopterin guanine dinucleotide). Tryptophan 892 contacts substrate. Mo-bis(molybdopterin guanine dinucleotide)-binding residues include asparagine 900 and lysine 917.

This sequence belongs to the prokaryotic molybdopterin-containing oxidoreductase family. NasA/NapA/NarB subfamily. Component of the periplasmic nitrate reductase NapAB complex composed of NapA and NapB. [4Fe-4S] cluster serves as cofactor. It depends on Mo-bis(molybdopterin guanine dinucleotide) as a cofactor. Post-translationally, predicted to be exported by the Tat system. The position of the signal peptide cleavage has not been experimentally proven.

The protein localises to the periplasm. It carries out the reaction 2 Fe(II)-[cytochrome] + nitrate + 2 H(+) = 2 Fe(III)-[cytochrome] + nitrite + H2O. Functionally, catalytic subunit of the periplasmic nitrate reductase complex NapAB. Receives electrons from NapB and catalyzes the reduction of nitrate to nitrite. In Campylobacter curvus (strain 525.92), this protein is Periplasmic nitrate reductase.